Here is a 353-residue protein sequence, read N- to C-terminus: uncharacterized protein (353 aa).

Zn(2+)-binding residues include C40, H70, C100, C103, C106, C114, and C158.

This sequence belongs to the zinc-containing alcohol dehydrogenase family. Zn(2+) serves as cofactor.

This is an uncharacterized protein from Escherichia coli (strain K12).